We begin with the raw amino-acid sequence, 205 residues long: Pyrrolidone-carboxylate peptidase (205 aa).

Residues Glu78, Cys141, and His165 contribute to the active site.

The protein belongs to the peptidase C15 family. In terms of assembly, homotetramer.

It localises to the cytoplasm. It carries out the reaction Release of an N-terminal pyroglutamyl group from a polypeptide, the second amino acid generally not being Pro.. Removes 5-oxoproline from various penultimate amino acid residues except L-proline. In Thermosipho africanus (strain TCF52B), this protein is Pyrrolidone-carboxylate peptidase.